A 135-amino-acid polypeptide reads, in one-letter code: MLSPKRNRFRKQHRGRMKGISYRGNRICFGRYALQALEPAWITSRQIEAGRRAMTRNVRRGGKIWVRIFPDKPVTVRPTETRMGSGKGSPEYWVAVVKPGRILYEMSGVAENIARKAISIAASKMPIKTQFIISG.

The protein belongs to the universal ribosomal protein uL16 family. As to quaternary structure, part of the 50S ribosomal subunit.

The protein resides in the plastid. The protein localises to the chloroplast. The sequence is that of Large ribosomal subunit protein uL16c from Gossypium hirsutum (Upland cotton).